A 64-amino-acid polypeptide reads, in one-letter code: Large ribosomal subunit protein bL28 (64 aa).

The disordered stretch occupies residues 1 to 23 (MARKDQISHRGPLSGNNRSHALN).

This sequence belongs to the bacterial ribosomal protein bL28 family.

This Mesomycoplasma hyopneumoniae (strain 232) (Mycoplasma hyopneumoniae) protein is Large ribosomal subunit protein bL28.